Consider the following 159-residue polypeptide: MRIGTGIDVHQFAEGRKLIVGGVEIPHSKGLKGHSDADVLLHAISDALLGAAALGDIGKHFPDTSPQFKDIDSMILLQHVGKLIAEEGYAIGNIDSVLVMEKPKVAPHIMAMRGNIAACLDIDVSKVAVKATTTEKLGYVGREEGVAAHAICLIEERKQ.

Residues Asp8 and His10 each coordinate a divalent metal cation. 4-CDP-2-C-methyl-D-erythritol 2-phosphate-binding positions include 8-10 and 34-35; these read DVH and HS. His42 serves as a coordination point for a divalent metal cation. 4-CDP-2-C-methyl-D-erythritol 2-phosphate-binding positions include 56-58, 132-135, and Arg142; these read DIG and TTTE.

Belongs to the IspF family. In terms of assembly, homotrimer. It depends on a divalent metal cation as a cofactor.

The enzyme catalyses 4-CDP-2-C-methyl-D-erythritol 2-phosphate = 2-C-methyl-D-erythritol 2,4-cyclic diphosphate + CMP. Its pathway is isoprenoid biosynthesis; isopentenyl diphosphate biosynthesis via DXP pathway; isopentenyl diphosphate from 1-deoxy-D-xylulose 5-phosphate: step 4/6. Functionally, involved in the biosynthesis of isopentenyl diphosphate (IPP) and dimethylallyl diphosphate (DMAPP), two major building blocks of isoprenoid compounds. Catalyzes the conversion of 4-diphosphocytidyl-2-C-methyl-D-erythritol 2-phosphate (CDP-ME2P) to 2-C-methyl-D-erythritol 2,4-cyclodiphosphate (ME-CPP) with a corresponding release of cytidine 5-monophosphate (CMP). The polypeptide is 2-C-methyl-D-erythritol 2,4-cyclodiphosphate synthase (Chlorobium phaeobacteroides (strain BS1)).